Consider the following 74-residue polypeptide: ATP synthase subunit c (74 aa).

Transmembrane regions (helical) follow at residues 8–28 (FIGA…VGNI) and 52–72 (IGFA…LMVL).

The protein belongs to the ATPase C chain family. F-type ATPases have 2 components, F(1) - the catalytic core - and F(0) - the membrane proton channel. F(1) has five subunits: alpha(3), beta(3), gamma(1), delta(1), epsilon(1). F(0) has three main subunits: a(1), b(2) and c(10-14). The alpha and beta chains form an alternating ring which encloses part of the gamma chain. F(1) is attached to F(0) by a central stalk formed by the gamma and epsilon chains, while a peripheral stalk is formed by the delta and b chains.

It localises to the cell inner membrane. F(1)F(0) ATP synthase produces ATP from ADP in the presence of a proton or sodium gradient. F-type ATPases consist of two structural domains, F(1) containing the extramembraneous catalytic core and F(0) containing the membrane proton channel, linked together by a central stalk and a peripheral stalk. During catalysis, ATP synthesis in the catalytic domain of F(1) is coupled via a rotary mechanism of the central stalk subunits to proton translocation. In terms of biological role, key component of the F(0) channel; it plays a direct role in translocation across the membrane. A homomeric c-ring of between 10-14 subunits forms the central stalk rotor element with the F(1) delta and epsilon subunits. The sequence is that of ATP synthase subunit c from Paramagnetospirillum magneticum (strain ATCC 700264 / AMB-1) (Magnetospirillum magneticum).